The chain runs to 350 residues: Nicotinate-nucleotide--dimethylbenzimidazole phosphoribosyltransferase (350 aa).

Glu-317 (proton acceptor) is an active-site residue.

The protein belongs to the CobT family.

It carries out the reaction 5,6-dimethylbenzimidazole + nicotinate beta-D-ribonucleotide = alpha-ribazole 5'-phosphate + nicotinate + H(+). It participates in nucleoside biosynthesis; alpha-ribazole biosynthesis; alpha-ribazole from 5,6-dimethylbenzimidazole: step 1/2. Functionally, catalyzes the synthesis of alpha-ribazole-5'-phosphate from nicotinate mononucleotide (NAMN) and 5,6-dimethylbenzimidazole (DMB). This Shewanella sp. (strain MR-4) protein is Nicotinate-nucleotide--dimethylbenzimidazole phosphoribosyltransferase.